The chain runs to 198 residues: Holliday junction resolvase RecU (198 aa).

The tract at residues 1-22 (MVNYPHKVSSQKRQTSLSQPKN) is disordered. Positions 11–22 (QKRQTSLSQPKN) are enriched in polar residues. Mg(2+) is bound by residues Thr81, Asp83, Glu96, and Gln115.

The protein belongs to the RecU family. The cofactor is Mg(2+).

The protein resides in the cytoplasm. The catalysed reaction is Endonucleolytic cleavage at a junction such as a reciprocal single-stranded crossover between two homologous DNA duplexes (Holliday junction).. Endonuclease that resolves Holliday junction intermediates in genetic recombination. Cleaves mobile four-strand junctions by introducing symmetrical nicks in paired strands. Promotes annealing of linear ssDNA with homologous dsDNA. Required for DNA repair, homologous recombination and chromosome segregation. The protein is Holliday junction resolvase RecU of Streptococcus pneumoniae serotype 2 (strain D39 / NCTC 7466).